The chain runs to 1026 residues: Multidrug resistance protein MdtC (1026 aa).

The next 10 helical transmembrane spans lie at 12–34 (VATL…LLPV), 336–353 (QSLI…FLFL), 360–382 (AIPA…LCGF), 431–450 (VGFT…LPLL), 463–485 (FAVT…TPML), 525–547 (HARW…YISI), 853–875 (LLLI…ESYV), 895–917 (LEWF…IGIV), 948–970 (LLRF…PLVL), and 985–1007 (TIVG…VYLF).

This sequence belongs to the resistance-nodulation-cell division (RND) (TC 2.A.6) family. MdtC subfamily. In terms of assembly, part of a tripartite efflux system composed of MdtA, MdtB and MdtC. MdtC forms a heteromultimer with MdtB.

The protein resides in the cell inner membrane. This chain is Multidrug resistance protein MdtC, found in Pectobacterium atrosepticum (strain SCRI 1043 / ATCC BAA-672) (Erwinia carotovora subsp. atroseptica).